Consider the following 305-residue polypeptide: Undecaprenyl-diphosphatase (305 aa).

8 helical membrane passes run 18 to 38 (GVTE…PALV), 55 to 75 (YLAF…VFFW), 103 to 123 (WLIV…EQLF), 130 to 150 (PVPA…GEVL), 187 to 207 (GVLI…RSGI), 225 to 245 (FSFL…IPEL), 246 to 266 (FGPL…ASFV), and 284 to 304 (LTPF…WLAL).

This sequence belongs to the UppP family.

The protein resides in the cell membrane. The catalysed reaction is di-trans,octa-cis-undecaprenyl diphosphate + H2O = di-trans,octa-cis-undecaprenyl phosphate + phosphate + H(+). Functionally, catalyzes the dephosphorylation of undecaprenyl diphosphate (UPP). Confers resistance to bacitracin. The protein is Undecaprenyl-diphosphatase of Mycolicibacterium paratuberculosis (strain ATCC BAA-968 / K-10) (Mycobacterium paratuberculosis).